A 95-amino-acid chain; its full sequence is Aspartyl/glutamyl-tRNA(Asn/Gln) amidotransferase subunit C (95 aa).

The protein belongs to the GatC family. Heterotrimer of A, B and C subunits.

The enzyme catalyses L-glutamyl-tRNA(Gln) + L-glutamine + ATP + H2O = L-glutaminyl-tRNA(Gln) + L-glutamate + ADP + phosphate + H(+). It carries out the reaction L-aspartyl-tRNA(Asn) + L-glutamine + ATP + H2O = L-asparaginyl-tRNA(Asn) + L-glutamate + ADP + phosphate + 2 H(+). Its function is as follows. Allows the formation of correctly charged Asn-tRNA(Asn) or Gln-tRNA(Gln) through the transamidation of misacylated Asp-tRNA(Asn) or Glu-tRNA(Gln) in organisms which lack either or both of asparaginyl-tRNA or glutaminyl-tRNA synthetases. The reaction takes place in the presence of glutamine and ATP through an activated phospho-Asp-tRNA(Asn) or phospho-Glu-tRNA(Gln). The protein is Aspartyl/glutamyl-tRNA(Asn/Gln) amidotransferase subunit C of Methylorubrum extorquens (strain CM4 / NCIMB 13688) (Methylobacterium extorquens).